Reading from the N-terminus, the 418-residue chain is Serine hydroxymethyltransferase (418 aa).

Residues Leu-121 and 125 to 127 contribute to the (6S)-5,6,7,8-tetrahydrofolate site; that span reads GHL. An N6-(pyridoxal phosphate)lysine modification is found at Lys-230. (6S)-5,6,7,8-tetrahydrofolate-binding positions include Glu-246 and 355 to 357; that span reads SPF.

The protein belongs to the SHMT family. Homodimer. The cofactor is pyridoxal 5'-phosphate.

The protein resides in the cytoplasm. It catalyses the reaction (6R)-5,10-methylene-5,6,7,8-tetrahydrofolate + glycine + H2O = (6S)-5,6,7,8-tetrahydrofolate + L-serine. It participates in one-carbon metabolism; tetrahydrofolate interconversion. It functions in the pathway amino-acid biosynthesis; glycine biosynthesis; glycine from L-serine: step 1/1. Catalyzes the reversible interconversion of serine and glycine with tetrahydrofolate (THF) serving as the one-carbon carrier. This reaction serves as the major source of one-carbon groups required for the biosynthesis of purines, thymidylate, methionine, and other important biomolecules. Also exhibits THF-independent aldolase activity toward beta-hydroxyamino acids, producing glycine and aldehydes, via a retro-aldol mechanism. The protein is Serine hydroxymethyltransferase of Streptococcus pneumoniae serotype 2 (strain D39 / NCTC 7466).